The sequence spans 382 residues: Fetuin-B (382 aa).

A signal peptide spans 1-15 (MGLLLPLALCILVLC). 2 Cystatin fetuin-B-type domains span residues 25 to 138 (ALNP…YNCT) and 149 to 255 (MTCP…VTCD). An N-linked (GlcNAc...) asparagine glycan is attached at asparagine 37. 3 disulfide bridges follow: cysteine 93/cysteine 104, cysteine 117/cysteine 137, and cysteine 151/cysteine 154. The N-linked (GlcNAc...) asparagine glycan is linked to asparagine 136. N-linked (GlcNAc...) asparagine glycosylation occurs at asparagine 182. 2 disulfide bridges follow: cysteine 216/cysteine 224 and cysteine 237/cysteine 254. 2 stretches are compositionally biased toward polar residues: residues 262-276 (PATG…QKPT) and 286-295 (QKNTPPTDSP). 2 disordered regions span residues 262 to 320 (PATG…EKGP) and 363 to 382 (ARTA…VLPP). 2 O-linked (GalNAc...) threonine glycosylation sites follow: threonine 289 and threonine 292. Basic and acidic residues predominate over residues 310–320 (LDDKNSQEKGP). Serine 315 is modified (phosphoserine).

Belongs to the fetuin family. As to expression, liver and testis.

Its subcellular location is the secreted. In terms of biological role, protease inhibitor required for egg fertilization. Required to prevent premature zona pellucida hardening before fertilization, probably by inhibiting the protease activity of ASTL, a protease that mediates the cleavage of ZP2 and triggers zona pellucida hardening. The polypeptide is Fetuin-B (FETUB) (Homo sapiens (Human)).